A 451-amino-acid polypeptide reads, in one-letter code: D(1A) dopamine receptor (451 aa).

The Extracellular portion of the chain corresponds to 1-22; that stretch reads MTFNITSMDEDVLLTERESSFR. Residue N4 is glycosylated (N-linked (GlcNAc...) asparagine). A helical transmembrane segment spans residues 23-48; the sequence is VLTGCFLSVLILSTLLGNTLVCAAVI. The Cytoplasmic segment spans residues 49-59; that stretch reads RFRHLRSKVTN. A helical transmembrane segment spans residues 60–86; that stretch reads FFVISLAVSDLLVAVLVMPWKAVAEIA. At 87 to 95 the chain is on the extracellular side; sequence GFWPFGTFC. C95 and C185 are joined by a disulfide. A helical transmembrane segment spans residues 96–118; the sequence is NIWVAFDIMCSTASILNLCVISV. Over 119–137 the chain is Cytoplasmic; the sequence is DRYWAISSPFRYERKMTPK. Residues 138–162 form a helical membrane-spanning segment; sequence VAFIMIGVAWTLSVLISFIPVQLNW. At 163–191 the chain is on the extracellular side; it reads HKAKTTSFFDLNITLHDRTMDNCDSSLNR. The chain crosses the membrane as a helical span at residues 192–217; the sequence is TYAISSSLISFYIPVAIMIVTYTRIY. Over 218–271 the chain is Cytoplasmic; the sequence is RIAAKQIRRISALERAAVHAKNCQNSTSNRNSLDCQQPESSLKTSFKRETKVLK. The chain crosses the membrane as a helical span at residues 272 to 298; the sequence is TLSVIMGVFVCCWLPFFILNCIVPFCD. Over 299-315 the chain is Extracellular; that stretch reads PSLTTSGTEPFCISSTT. Residues 316 to 340 traverse the membrane as a helical segment; it reads FDVFVWFGWANSSLNPIIYAFNADF. Over 341 to 451 the chain is Cytoplasmic; the sequence is RKAFSNLLGC…PITQNGQPKT (111 aa). The S-palmitoyl cysteine moiety is linked to residue C350.

Belongs to the G-protein coupled receptor 1 family. In terms of tissue distribution, brain.

The protein localises to the cell membrane. It localises to the cell projection. Its subcellular location is the cilium membrane. In terms of biological role, dopamine receptor whose activity is mediated by G proteins which activate adenylyl cyclase. The polypeptide is D(1A) dopamine receptor (drd1) (Xenopus laevis (African clawed frog)).